The following is a 404-amino-acid chain: Exodeoxyribonuclease 7 large subunit (404 aa).

It belongs to the XseA family. Heterooligomer composed of large and small subunits.

It localises to the cytoplasm. The catalysed reaction is Exonucleolytic cleavage in either 5'- to 3'- or 3'- to 5'-direction to yield nucleoside 5'-phosphates.. In terms of biological role, bidirectionally degrades single-stranded DNA into large acid-insoluble oligonucleotides, which are then degraded further into small acid-soluble oligonucleotides. The polypeptide is Exodeoxyribonuclease 7 large subunit (Mesoplasma florum (strain ATCC 33453 / NBRC 100688 / NCTC 11704 / L1) (Acholeplasma florum)).